Reading from the N-terminus, the 250-residue chain is Proteasome subunit alpha type-7-A (250 aa).

Residue Lys62 forms a Glycyl lysine isopeptide (Lys-Gly) (interchain with G-Cter in ubiquitin) linkage.

Belongs to the peptidase T1A family. Component of the 20S core complex of the 26S proteasome. The 26S proteasome is composed of a core protease (CP), known as the 20S proteasome, capped at one or both ends by the 19S regulatory particle (RP/PA700). The 20S proteasome core is composed of 28 subunits that are arranged in four stacked rings, resulting in a barrel-shaped structure. The two end rings are each formed by seven alpha subunits, and the two central rings are each formed by seven beta subunits. The catalytic chamber with the active sites is on the inside of the barrel. Interacts with KIN10 and KIN11 SnRK subunits, and with the SKP1A/ASK1 subunit of the SCF E3 ubiquitin ligase complex. In terms of tissue distribution, expressed in roots, leaves and flowers.

The protein localises to the cytoplasm. It is found in the nucleus. In terms of biological role, the proteasome is a multicatalytic proteinase complex which is characterized by its ability to cleave peptides with Arg, Phe, Tyr, Leu, and Glu adjacent to the leaving group at neutral or slightly basic pH. The proteasome has an ATP-dependent proteolytic activity. Mediates the association of the SCF(TIR1) E3 ubiquitin ligase complex with the proteasome. The protein is Proteasome subunit alpha type-7-A (PAD1) of Arabidopsis thaliana (Mouse-ear cress).